Reading from the N-terminus, the 812-residue chain is Valine--tRNA ligase (812 aa).

A 'HIGH' region motif is present at residues 46 to 56; it reads PTVSGQLHIGH. The 'KMSKS' region motif lies at 536–540; it reads KMSKS. Lys539 contacts ATP.

This sequence belongs to the class-I aminoacyl-tRNA synthetase family. ValS type 2 subfamily. Monomer.

Its subcellular location is the cytoplasm. The enzyme catalyses tRNA(Val) + L-valine + ATP = L-valyl-tRNA(Val) + AMP + diphosphate. Its function is as follows. Catalyzes the attachment of valine to tRNA(Val). As ValRS can inadvertently accommodate and process structurally similar amino acids such as threonine, to avoid such errors, it has a 'posttransfer' editing activity that hydrolyzes mischarged Thr-tRNA(Val) in a tRNA-dependent manner. The polypeptide is Valine--tRNA ligase (Rickettsia akari (strain Hartford)).